We begin with the raw amino-acid sequence, 1221 residues long: A disintegrin and metalloproteinase with thrombospondin motifs 18 (1221 aa).

Residues 1-47 (MECALLLACAFPAAGSGPPRGLAGLGRVAKALQLCCLCCASVAAALA) form the signal peptide. Residues 48 to 284 (SDSSSGASGL…EYGSSGRPRR (237 aa)) constitute a propeptide that is removed on maturation. Asparagine 151 and asparagine 190 each carry an N-linked (GlcNAc...) asparagine glycan. The Cysteine switch signature appears at 252-259 (HFCGRRKK). A Zn(2+)-binding site is contributed by cysteine 254. A disordered region spans residues 258-291 (KKYAPKPPTEDTYLRFDEYGSSGRPRRSAGKSQK). Basic and acidic residues predominate over residues 265-275 (PTEDTYLRFDE). One can recognise a Peptidase M12B domain in the interval 293-498 (LNVETLVVAD…PQAGCLVDEP (206 aa)). The N-linked (GlcNAc...) asparagine glycan is linked to asparagine 313. 11 disulfides stabilise this stretch: cysteine 369/cysteine 420, cysteine 395/cysteine 402, cysteine 414/cysteine 493, cysteine 453/cysteine 477, cysteine 521/cysteine 546, cysteine 532/cysteine 553, cysteine 541/cysteine 572, cysteine 566/cysteine 577, cysteine 601/cysteine 638, cysteine 605/cysteine 643, and cysteine 616/cysteine 628. Histidine 436 is a binding site for Zn(2+). Glutamate 437 is an active-site residue. Residues histidine 440 and histidine 446 each contribute to the Zn(2+) site. The Disintegrin domain occupies 498–577 (PKQAGQYKYP…LSMWCRQGQC (80 aa)). A TSP type-1 1 domain is found at 589–644 (HGQWSAWSKWSECSRTCGGGVKFQERHCNNPKPQYGGLFCPGSSRIYQLCNINPCN). N-linked (GlcNAc...) asparagine glycosylation is found at asparagine 745, asparagine 838, and asparagine 909. Residues 750 to 876 (FYKGLYLNQH…TPPATKRPAY (127 aa)) are spacer. 4 consecutive TSP type-1 domains span residues 931–990 (CPAY…NSHA), 991–1049 (CPPQ…GRCP), 1052–1116 (SRLQ…RACP), and 1123–1178 (MVAG…NFCP). The region spanning 1184 to 1221 (EDPSCVDFFNWCHLVPQHGVCNHKFYGKQCCKSCTRKI) is the PLAC domain.

The cofactor is Zn(2+). The precursor is cleaved by a furin endopeptidase. Post-translationally, glycosylated. Can be O-fucosylated by POFUT2 on a serine or a threonine residue found within the consensus sequence C1-X(2)-(S/T)-C2-G of the TSP type-1 repeat domains where C1 and C2 are the first and second cysteine residue of the repeat, respectively. Fucosylated repeats can then be further glycosylated by the addition of a beta-1,3-glucose residue by the glucosyltransferase, B3GALTL. Fucosylation mediates the efficient secretion of ADAMTS family members. Can also be C-glycosylated with one or two mannose molecules on tryptophan residues within the consensus sequence W-X-X-W of the TPRs, and N-glycosylated. These other glycosylations can also facilitate secretion. As to expression, expressed in fetal lung, liver, and kidney and in adult brain, prostate, submaxillary gland, and endothelium.

The protein resides in the secreted. The protein localises to the extracellular space. It localises to the extracellular matrix. The polypeptide is A disintegrin and metalloproteinase with thrombospondin motifs 18 (ADAMTS18) (Homo sapiens (Human)).